A 342-amino-acid chain; its full sequence is Phosphate acyltransferase (342 aa).

The protein belongs to the PlsX family. In terms of assembly, homodimer. Probably interacts with PlsY.

The protein resides in the cytoplasm. It catalyses the reaction a fatty acyl-[ACP] + phosphate = an acyl phosphate + holo-[ACP]. It participates in lipid metabolism; phospholipid metabolism. Catalyzes the reversible formation of acyl-phosphate (acyl-PO(4)) from acyl-[acyl-carrier-protein] (acyl-ACP). This enzyme utilizes acyl-ACP as fatty acyl donor, but not acyl-CoA. In Actinobacillus succinogenes (strain ATCC 55618 / DSM 22257 / CCUG 43843 / 130Z), this protein is Phosphate acyltransferase.